Consider the following 178-residue polypeptide: uncharacterized protein (178 aa).

Residues 1 to 13 (MEVASSSSACQFD) show a composition bias toward polar residues. Disordered stretches follow at residues 1-24 (MEVA…ELKP) and 47-114 (WPSR…KKEK).

This is an uncharacterized protein from Caenorhabditis elegans.